The following is a 263-amino-acid chain: HTH-type transcriptional regulator KdgR (263 aa).

Residues 13 to 74 (VSSVLKVFGI…GESEKYSLTL (62 aa)) form the HTH iclR-type domain. Residues 34–53 (ITELSQRVMMSKSTVYRFLQ) constitute a DNA-binding region (H-T-H motif). In terms of domain architecture, IclR-ED spans 89–258 (LIRSADIQMR…ARKISAQMGY (170 aa)).

Its subcellular location is the cytoplasm. Its function is as follows. Transcriptional repressor that negatively regulates the expression of kdgT, kdgK and kdgA, which encode proteins involved in transport and catabolism of 2-keto-3-deoxygluconate (KDG). Also represses expression of eda, which encodes the Entner-Doudoroff aldolase, by binding to its P2 promoter region. The chain is HTH-type transcriptional regulator KdgR from Escherichia coli (strain K12).